The primary structure comprises 877 residues: Valine--tRNA ligase (877 aa).

The 'HIGH' region signature appears at 46–56; the sequence is PYPTGSIHMGH. A 'KMSKS' region motif is present at residues 529–533; sequence KMSKS. Residue Lys-532 coordinates ATP.

It belongs to the class-I aminoacyl-tRNA synthetase family. ValS type 2 subfamily.

Its subcellular location is the cytoplasm. It catalyses the reaction tRNA(Val) + L-valine + ATP = L-valyl-tRNA(Val) + AMP + diphosphate. Its function is as follows. Catalyzes the attachment of valine to tRNA(Val). As ValRS can inadvertently accommodate and process structurally similar amino acids such as threonine, to avoid such errors, it has a 'posttransfer' editing activity that hydrolyzes mischarged Thr-tRNA(Val) in a tRNA-dependent manner. The protein is Valine--tRNA ligase of Methanothermobacter thermautotrophicus (strain ATCC 29096 / DSM 1053 / JCM 10044 / NBRC 100330 / Delta H) (Methanobacterium thermoautotrophicum).